A 249-amino-acid chain; its full sequence is 2,3-bisphosphoglycerate-dependent phosphoglycerate mutase (249 aa).

Residues 8 to 15 (RHGESAWN), 21 to 22 (TG), R60, 87 to 90 (ERHY), K98, 114 to 115 (RR), and 183 to 184 (GN) contribute to the substrate site. Catalysis depends on H9, which acts as the Tele-phosphohistidine intermediate. Catalysis depends on E87, which acts as the Proton donor/acceptor.

Belongs to the phosphoglycerate mutase family. BPG-dependent PGAM subfamily.

It catalyses the reaction (2R)-2-phosphoglycerate = (2R)-3-phosphoglycerate. The protein operates within carbohydrate degradation; glycolysis; pyruvate from D-glyceraldehyde 3-phosphate: step 3/5. Its function is as follows. Catalyzes the interconversion of 2-phosphoglycerate and 3-phosphoglycerate. The protein is 2,3-bisphosphoglycerate-dependent phosphoglycerate mutase of Methanosphaerula palustris (strain ATCC BAA-1556 / DSM 19958 / E1-9c).